A 245-amino-acid chain; its full sequence is Ribosomal RNA small subunit methyltransferase J (245 aa).

Residues 94–95 (RD), 110–111 (ER), and D164 each bind S-adenosyl-L-methionine.

It belongs to the methyltransferase superfamily. RsmJ family.

It localises to the cytoplasm. The enzyme catalyses guanosine(1516) in 16S rRNA + S-adenosyl-L-methionine = N(2)-methylguanosine(1516) in 16S rRNA + S-adenosyl-L-homocysteine + H(+). Functionally, specifically methylates the guanosine in position 1516 of 16S rRNA. The chain is Ribosomal RNA small subunit methyltransferase J from Dechloromonas aromatica (strain RCB).